The sequence spans 179 residues: Coiled-coil domain-containing protein 32 (179 aa).

Residues 36-65 (DNAFSDSFMDSHPAGESHTAAADSAVQPAG) are disordered. Residues 75–98 (EVYLASLEKKLRRIKGLNEEVTSK) are a coiled coil. The tract at residues 158–179 (LIPPESQAEKPEAGDKPAAAEQ) is disordered.

As to quaternary structure, interacts with AP2S1; the interaction is direct and mediates association with adaptor protein complex 2 (AP-2).

The protein resides in the membrane. Its subcellular location is the coated pit. Functionally, regulates clathrin-mediated endocytsois of cargos such as transferrin probably through the association and modulation of adaptor protein complex 2 (AP-2). Has a role in ciliogenesis. Required for proper cephalic and left/right axis development. The polypeptide is Coiled-coil domain-containing protein 32 (Ccdc32) (Mus musculus (Mouse)).